The chain runs to 251 residues: Ell1-associated factor 1 (251 aa).

Disordered stretches follow at residues serine 110–valine 187 and phenylalanine 201–aspartate 251. Residues threonine 112–asparagine 123 are compositionally biased toward polar residues. Over residues serine 124–serine 135 the composition is skewed to low complexity. Residues arginine 143 to isoleucine 157 are compositionally biased toward basic and acidic residues. Composition is skewed to polar residues over residues glutamate 204 to lysine 220 and serine 236 to aspartate 251. Serine 247 carries the post-translational modification Phosphoserine.

This sequence belongs to the EAF family. In terms of assembly, forms a stable heterodimer with ell1. Ell1-eaf1 complex interacts with RNA polymerase II.

Its subcellular location is the nucleus. Its function is as follows. Activates transcription elongation by RNA polymerase II and pyrophosphorolysis as a complex with ell1. Acts as a transcriptional transactivator of ell1 elongation activities. The chain is Ell1-associated factor 1 (eaf1) from Schizosaccharomyces pombe (strain 972 / ATCC 24843) (Fission yeast).